Here is a 1280-residue protein sequence, read N- to C-terminus: Ankyrin repeat and sterile alpha motif domain-containing protein 1B (1280 aa).

ANK repeat units lie at residues 2-31 (GKEQ…GLLG), 57-86 (SGYT…STNV), 90-119 (KGCF…SHSR), 126-155 (EKET…DPSM), 159-188 (RGET…NLMS), 192-221 (RKHT…DVNT), and 224-253 (EKGS…DANI). 5 disordered regions span residues 299 to 322 (RHRP…LRHK), 361 to 399 (MESF…EEKS), 479 to 573 (SVSD…STGS), 704 to 723 (NGEA…SNTG), and 755 to 791 (SNLV…PSFT). The span at 482–491 (DAERGNHGDD) shows a compositional bias: basic and acidic residues. 3 stretches are compositionally biased toward polar residues: residues 520-550 (KQRT…SSLG), 707-723 (ARSN…SNTG), and 770-782 (SRGQ…SSPS). SAM domains lie at 824-890 (CPVQ…LPRV) and 898-963 (NNPT…RLHE). 2 disordered regions span residues 960–994 (RLHE…LSQA) and 1208–1243 (GSST…MDQK). Polar residues predominate over residues 980–994 (GNHTPPQLSPSLSQA). Residues 1071 to 1223 (IFQSCDYEAY…ESFDSKPSKP (153 aa)) form the PID domain.

It is found in the cytoplasm. The protein is Ankyrin repeat and sterile alpha motif domain-containing protein 1B (anks1b) of Danio rerio (Zebrafish).